The following is a 402-amino-acid chain: 1-deoxy-D-xylulose 5-phosphate reductoisomerase (402 aa).

The NADPH site is built by threonine 21, glycine 22, serine 23, isoleucine 24, glycine 47, asparagine 50, and asparagine 127. Lysine 128 lines the 1-deoxy-D-xylulose 5-phosphate pocket. Glutamate 129 is an NADPH binding site. Residue aspartate 151 participates in Mn(2+) binding. 1-deoxy-D-xylulose 5-phosphate is bound by residues serine 152, glutamate 153, serine 177, and histidine 200. Glutamate 153 provides a ligand contact to Mn(2+). An NADPH-binding site is contributed by glycine 206. 1-deoxy-D-xylulose 5-phosphate is bound by residues serine 213, asparagine 218, lysine 219, and glutamate 222. Position 222 (glutamate 222) interacts with Mn(2+).

The protein belongs to the DXR family. Requires Mg(2+) as cofactor. The cofactor is Mn(2+).

It carries out the reaction 2-C-methyl-D-erythritol 4-phosphate + NADP(+) = 1-deoxy-D-xylulose 5-phosphate + NADPH + H(+). It participates in isoprenoid biosynthesis; isopentenyl diphosphate biosynthesis via DXP pathway; isopentenyl diphosphate from 1-deoxy-D-xylulose 5-phosphate: step 1/6. Catalyzes the NADPH-dependent rearrangement and reduction of 1-deoxy-D-xylulose-5-phosphate (DXP) to 2-C-methyl-D-erythritol 4-phosphate (MEP). This chain is 1-deoxy-D-xylulose 5-phosphate reductoisomerase, found in Mycobacterium ulcerans (strain Agy99).